A 500-amino-acid chain; its full sequence is L-arabinose isomerase (500 aa).

Mn(2+) contacts are provided by glutamate 306, glutamate 333, histidine 350, and histidine 450.

This sequence belongs to the arabinose isomerase family. In terms of assembly, homohexamer. Mn(2+) is required as a cofactor.

The catalysed reaction is beta-L-arabinopyranose = L-ribulose. It participates in carbohydrate degradation; L-arabinose degradation via L-ribulose; D-xylulose 5-phosphate from L-arabinose (bacterial route): step 1/3. Its function is as follows. Catalyzes the conversion of L-arabinose to L-ribulose. In Salmonella enteritidis PT4 (strain P125109), this protein is L-arabinose isomerase.